The following is a 189-amino-acid chain: MDQTLSKEERNELMDLLQITRAAWGNLSMMKKAYKNVSKLYHPDKGGDSAKMQRLNELFQRVQVTLMEIRSQCGSSSSQVAWFFWDENFRTLGAFLGEKFNEKIIGLYPTCTKFVRANCNCIVCLLKKQHAGTKKNLKKPCLVWGECWCYKCYLVWFGFPEDFTSFRYWTLLMANMDLSMLKLWTELGF.

Position 1 is an N-acetylmethionine; by host (methionine 1). The J domain occupies 12–75 (ELMDLLQITR…LMEIRSQCGS (64 aa)). The C4-type; atypical zinc finger occupies 111–124 (CTKFVRANCNCIVC). The H1C3-type; atypical zinc-finger motif lies at 130–152 (HAGTKKNLKKPCLVWGECWCYKC).

As to quaternary structure, interacts with host PPP2R1A; the interaction inhibits PP2A activity.

Its subcellular location is the host cytoplasm. The protein localises to the host nucleus. Promotes efficient viral genome replication by accelerating both G1 and S phase progression of the cell cycle. Inhibits host PP2A by binding to the A subunit, thereby displacing lower affinity regulatory B subunit. Inactivation of PP2A in turn results in the transactivation of cyclin A and cyclin D1 promoters. Late during the infection cycle, ST may induce dephosphorylation of host MTOR, leading to the inhibition of cap-dependent translation. May establish and maintain high levels of viral genomes during persistent infection in cell culture. The chain is Small t antigen from B-lymphotropic polyomavirus (LPV).